The sequence spans 158 residues: Ribonuclease H (158 aa).

Positions 3–144 constitute an RNase H type-1 domain; the sequence is ELKLIHIFTD…CDQLARAAAE (142 aa). Positions 12, 50, 72, and 136 each coordinate Mg(2+).

The protein belongs to the RNase H family. As to quaternary structure, monomer. Mg(2+) is required as a cofactor.

Its subcellular location is the cytoplasm. The catalysed reaction is Endonucleolytic cleavage to 5'-phosphomonoester.. Endonuclease that specifically degrades the RNA of RNA-DNA hybrids. The sequence is that of Ribonuclease H from Shewanella sp. (strain MR-7).